The chain runs to 331 residues: DNA-directed RNA polymerase subunit alpha (331 aa).

The tract at residues 1–237 (MQSFEKEFLK…DQLSSFIDLK (237 aa)) is alpha N-terminal domain (alpha-NTD). The segment at 251–331 (FDPSLLNLVD…NWPPKHLSEQ (81 aa)) is alpha C-terminal domain (alpha-CTD).

This sequence belongs to the RNA polymerase alpha chain family. Homodimer. The RNAP catalytic core consists of 2 alpha, 1 beta, 1 beta' and 1 omega subunit. When a sigma factor is associated with the core the holoenzyme is formed, which can initiate transcription.

The catalysed reaction is RNA(n) + a ribonucleoside 5'-triphosphate = RNA(n+1) + diphosphate. DNA-dependent RNA polymerase catalyzes the transcription of DNA into RNA using the four ribonucleoside triphosphates as substrates. The polypeptide is DNA-directed RNA polymerase subunit alpha (Blochmanniella floridana).